Reading from the N-terminus, the 719-residue chain is Probable 1-deoxy-D-xylulose-5-phosphate synthase, chloroplastic (719 aa).

The N-terminal 57 residues, 1-57, are a transit peptide targeting the chloroplast; that stretch reads MALCAYAFPGILNRTVAVASDASKPTPLFSEWIHGTDLQFQFHQKLTQVKKRSRTVQ. Thiamine diphosphate-binding positions include H145 and 186-188; that span reads GHS. D217 provides a ligand contact to Mg(2+). Residues 218–219, N246, Y367, and E449 contribute to the thiamine diphosphate site; that span reads GA. A Mg(2+)-binding site is contributed by N246.

It belongs to the transketolase family. DXPS subfamily. In terms of assembly, homodimer. Mg(2+) is required as a cofactor. Requires thiamine diphosphate as cofactor.

It is found in the plastid. It localises to the chloroplast. It carries out the reaction D-glyceraldehyde 3-phosphate + pyruvate + H(+) = 1-deoxy-D-xylulose 5-phosphate + CO2. It functions in the pathway metabolic intermediate biosynthesis; 1-deoxy-D-xylulose 5-phosphate biosynthesis; 1-deoxy-D-xylulose 5-phosphate from D-glyceraldehyde 3-phosphate and pyruvate: step 1/1. Catalyzes the acyloin condensation reaction between C atoms 2 and 3 of pyruvate and glyceraldehyde 3-phosphate to yield 1-deoxy-D-xylulose-5-phosphate (DXP). In Capsicum annuum (Capsicum pepper), this protein is Probable 1-deoxy-D-xylulose-5-phosphate synthase, chloroplastic (TKT2).